The primary structure comprises 391 residues: Phosphoglycerate kinase (391 aa).

Substrate-binding positions include 21-23 (DLN), Arg36, 59-62 (HLGR), Arg113, and Arg146. Residues Lys197, Glu319, and 345–348 (GGDT) each bind ATP.

Belongs to the phosphoglycerate kinase family. In terms of assembly, monomer.

It localises to the cytoplasm. It carries out the reaction (2R)-3-phosphoglycerate + ATP = (2R)-3-phospho-glyceroyl phosphate + ADP. Its pathway is carbohydrate degradation; glycolysis; pyruvate from D-glyceraldehyde 3-phosphate: step 2/5. In Pseudoalteromonas translucida (strain TAC 125), this protein is Phosphoglycerate kinase.